Here is a 962-residue protein sequence, read N- to C-terminus: MLAQFLRSLFRFRKTTVSVLLVATYVVVFLLNVWDRIRYQYSLPEDNKHHKQLLDASWIDLQSITRKPHPYTSRENDAVHDFLLHRVTELVEGAPHAEVSDDYKEGNHLVFKQPDVFNSSSTESRIVSFESSNIVVKITGSQPELPGLLISAHFDSVPTALGATDDGVGIVTLLALITRYAKKQPRRTLVFNLNNNEEFGLLGASAFLNHRWRPLVDYVLNLEGTGAGGKAVLFRTSDTNTASIYKNAVKTQPFGNSIYQQAFYDRYISSETDYKVYEQAGLRGWDIAFYKPRALYHTIKDSTQFTSQASLWNMMHASLQLADFIAFESFEDEPKDRSPAVYFDIIGTFFVTASTKDLFTLNCVVLSVIPVIILVLEFVIQRRKTRERNPLLVWLRLPFSMFISYLVTATFRSSLFRVNPLIFSRDYVSPTIGFSFTFLILNYLVLSLLEYLAPSRDLKTVSFVELFFGMWIALLWATIRLCTSKYTATGVYPITVLYLLMSFGAIVGLVCSAFKRKHSVVKAKDSEETAAPNTYSSIEESPQQATNTEAPNENSPEEHDERAPLLRASNSSQVSSVTNVSEAPSSALKAFVVSALNYDWSVQFLAVVPLASFFVIMCLSLILDGIYQTCQEGFQATWNVSKISMLGGMLLAIPVLPFCYKLNYFVSMVLLFAAASAGIFSFERAPFTESSPLKLRFSQELNLHDELGFSTVNVFGRQGAGIEQILRNIPSTQNAHSNVECTSNGQGSETCRYAGPRPHLVSSSSIPELSDILSIKVLSNNRKSSGRSSYEPINAELVINVKENRLCTIGFNSSQFAEHDYGQSPVKQVTIFGNAHHDNRTRSQLSTLDGLSRDDEENRIFKWNRGINSLQLHKLDFERNYYHVGIQWMPTILSQDADEESSDALGLKIRCFWGEYDSVSIINGEVKRKVPALDELLAYSPKEVSFSNREAGLVIVNDYIEL.

The Cytoplasmic segment spans residues 1 to 14 (MLAQFLRSLFRFRK). The chain crosses the membrane as a helical span at residues 15–35 (TTVSVLLVATYVVVFLLNVWD). Over 36–359 (RIRYQYSLPE…FVTASTKDLF (324 aa)) the chain is Vacuolar. An N-linked (GlcNAc...) asparagine glycan is attached at asparagine 118. 2 residues coordinate Zn(2+): histidine 153 and aspartate 165. The active-site Proton acceptor is glutamate 197. Residues glutamate 198, glutamate 223, and histidine 297 each contribute to the Zn(2+) site. The helical transmembrane segment at 360-380 (TLNCVVLSVIPVIILVLEFVI) threads the bilayer. Topologically, residues 381-390 (QRRKTRERNP) are cytoplasmic. A helical membrane pass occupies residues 391–411 (LLVWLRLPFSMFISYLVTATF). Topologically, residues 412–431 (RSSLFRVNPLIFSRDYVSPT) are vacuolar. A helical transmembrane segment spans residues 432–452 (IGFSFTFLILNYLVLSLLEYL). Over 453–460 (APSRDLKT) the chain is Cytoplasmic. Residues 461-481 (VSFVELFFGMWIALLWATIRL) traverse the membrane as a helical segment. The Vacuolar portion of the chain corresponds to 482–489 (CTSKYTAT). A helical transmembrane segment spans residues 490–510 (GVYPITVLYLLMSFGAIVGLV). Topologically, residues 511–601 (CSAFKRKHSV…VVSALNYDWS (91 aa)) are cytoplasmic. The span at 531–554 (APNTYSSIEESPQQATNTEAPNEN) shows a compositional bias: polar residues. The tract at residues 531–563 (APNTYSSIEESPQQATNTEAPNENSPEEHDERA) is disordered. Residues 602–622 (VQFLAVVPLASFFVIMCLSLI) form a helical membrane-spanning segment. Residues 623–639 (LDGIYQTCQEGFQATWN) lie on the Vacuolar side of the membrane. An N-linked (GlcNAc...) asparagine glycan is attached at asparagine 639. The helical transmembrane segment at 640–660 (VSKISMLGGMLLAIPVLPFCY) threads the bilayer. A topological domain (cytoplasmic) is located at residue lysine 661. A helical transmembrane segment spans residues 662 to 682 (LNYFVSMVLLFAAASAGIFSF). At 683–962 (ERAPFTESSP…LVIVNDYIEL (280 aa)) the chain is on the vacuolar side. N-linked (GlcNAc...) asparagine glycosylation is found at asparagine 812 and asparagine 839.

Belongs to the peptidase M28 family. Zn(2+) serves as cofactor.

It localises to the vacuole membrane. Its function is as follows. May be involved in vacuolar sorting and osmoregulation. In Lachancea thermotolerans (strain ATCC 56472 / CBS 6340 / NRRL Y-8284) (Yeast), this protein is Vacuolar membrane protease.